A 203-amino-acid chain; its full sequence is uncharacterized protein (203 aa).

Residues 1–23 (MGSSFVIDRSSSSPAPPRGPAPK) are disordered.

This is an uncharacterized protein from Saccharomyces cerevisiae (strain ATCC 204508 / S288c) (Baker's yeast).